A 417-amino-acid chain; its full sequence is Serine hydroxymethyltransferase (417 aa).

(6S)-5,6,7,8-tetrahydrofolate contacts are provided by residues L121 and 125-127 (GHL). At K229 the chain carries N6-(pyridoxal phosphate)lysine. 355 to 357 (SPF) lines the (6S)-5,6,7,8-tetrahydrofolate pocket.

Belongs to the SHMT family. In terms of assembly, homodimer. Pyridoxal 5'-phosphate serves as cofactor.

It localises to the cytoplasm. The catalysed reaction is (6R)-5,10-methylene-5,6,7,8-tetrahydrofolate + glycine + H2O = (6S)-5,6,7,8-tetrahydrofolate + L-serine. Its pathway is one-carbon metabolism; tetrahydrofolate interconversion. It participates in amino-acid biosynthesis; glycine biosynthesis; glycine from L-serine: step 1/1. Catalyzes the reversible interconversion of serine and glycine with tetrahydrofolate (THF) serving as the one-carbon carrier. This reaction serves as the major source of one-carbon groups required for the biosynthesis of purines, thymidylate, methionine, and other important biomolecules. Also exhibits THF-independent aldolase activity toward beta-hydroxyamino acids, producing glycine and aldehydes, via a retro-aldol mechanism. The protein is Serine hydroxymethyltransferase of Xylella fastidiosa (strain M12).